The sequence spans 422 residues: Glycine amidinotransferase, mitochondrial (422 aa).

The transit peptide at 1 to 37 directs the protein to the mitochondrion; that stretch reads MLRVRCLRGGSRGAEAVHYIGSMLRKSFVGWVQRSFQ. Active-site residues include Asp253 and His302. The active-site Amidino-cysteine intermediate is the Cys406.

This sequence belongs to the amidinotransferase family. In terms of assembly, homodimer. Ubiquitously expressed in adult tissues, with highest levels in muscle and intermediate levels in eye, heart, liver, stomach and testis. In stage 28 embryos, expression is higher in the dorsal and ventral parts of the trunk than in the head. In middle gastrulae, expression is highest around the yolk plug, while in stage 15 and tailbud stage embryos, expression is largely restricted to the region around the presumptive notochord and gut.

It is found in the mitochondrion inner membrane. It carries out the reaction L-arginine + glycine = guanidinoacetate + L-ornithine. It functions in the pathway amine and polyamine biosynthesis; creatine biosynthesis; creatine from L-arginine and glycine: step 1/2. In terms of biological role, catalyzes the biosynthesis of guanidinoacetate, the immediate precursor of creatine. Creatine plays a vital role in energy metabolism in muscle tissues. May play a role in embryonic and central nervous system development. The sequence is that of Glycine amidinotransferase, mitochondrial from Xenopus laevis (African clawed frog).